We begin with the raw amino-acid sequence, 417 residues long: MAEIKNYTLNFGPQHPAAHGVLRLVLELDGEVIQRADPHIGLLHRATEKLAENKTFIQSVPYMDRLDYVSMMVNEHGYVLAIEKLLGIEVPERAQYIRVLFDEITRVLNHLMWIGAHALDVGAMAVFLYAFREREDLMDVYEAVSGARMHAAYYRPGGVYRDLPEAMPQYKASKIRNERALAKMNEARSGSVLDFIDDFFTRFPKCVDEYETLLTDNRIWKQRLVGIGVVSPERALQLGLTGPMIRGSGIAWDLRKKQPYEVYDRLDFDIPVGVNGDCYDRYLVRVEEMRQSTRIAKQCIEWLRKNPGPVITDNHKVAPPSRVGMKTNMEDLIHHFKLFTEGFHVPEGETYAAVEHPKGEFGIYLVSDGANKPYRLKIRAPGYAHLSALDEMARGHMIADAVTIIGTQDIVFGEIDR.

The protein belongs to the complex I 49 kDa subunit family. NDH-1 is composed of 14 different subunits. Subunits NuoB, C, D, E, F, and G constitute the peripheral sector of the complex.

Its subcellular location is the cell inner membrane. It catalyses the reaction a quinone + NADH + 5 H(+)(in) = a quinol + NAD(+) + 4 H(+)(out). In terms of biological role, NDH-1 shuttles electrons from NADH, via FMN and iron-sulfur (Fe-S) centers, to quinones in the respiratory chain. The immediate electron acceptor for the enzyme in this species is believed to be ubiquinone. Couples the redox reaction to proton translocation (for every two electrons transferred, four hydrogen ions are translocated across the cytoplasmic membrane), and thus conserves the redox energy in a proton gradient. The polypeptide is NADH-quinone oxidoreductase subunit D (Burkholderia mallei (strain NCTC 10247)).